The following is a 782-amino-acid chain: Endonuclease MutS2 (782 aa).

336–343 (GPNTGGKT) lines the ATP pocket. A Smr domain is found at 707 to 782 (LDLRGYRYEE…GFGVTVAELK (76 aa)).

The protein belongs to the DNA mismatch repair MutS family. MutS2 subfamily. Homodimer. Binds to stalled ribosomes, contacting rRNA.

Its function is as follows. Endonuclease that is involved in the suppression of homologous recombination and thus may have a key role in the control of bacterial genetic diversity. Acts as a ribosome collision sensor, splitting the ribosome into its 2 subunits. Detects stalled/collided 70S ribosomes which it binds and splits by an ATP-hydrolysis driven conformational change. Acts upstream of the ribosome quality control system (RQC), a ribosome-associated complex that mediates the extraction of incompletely synthesized nascent chains from stalled ribosomes and their subsequent degradation. Probably generates substrates for RQC. The sequence is that of Endonuclease MutS2 from Staphylococcus epidermidis (strain ATCC 35984 / DSM 28319 / BCRC 17069 / CCUG 31568 / BM 3577 / RP62A).